The chain runs to 362 residues: Caveolae-associated protein 4 (362 aa).

The segment at 1-24 (MEHNGSASNAGKIHQNRLSSVTED) is disordered. A coiled-coil region spans residues 100-120 (IKDVKARVEKQQVRVTKVETK). 3 positions are modified to phosphoserine: serine 152, serine 171, and serine 172. 3 stretches are compositionally biased toward basic and acidic residues: residues 230 to 255 (RERL…ERFK), 275 to 289 (KAKD…VDRG), and 305 to 320 (HEFH…KEVT). 2 disordered regions span residues 230-289 (RERL…VDRG) and 305-346 (HEFH…KPQV). Tyrosine 324 carries the post-translational modification Phosphotyrosine. Threonine 334 carries the post-translational modification Phosphothreonine. Residue serine 353 is modified to Phosphoserine.

Belongs to the CAVIN family. As to quaternary structure, component of the CAVIN complex composed of CAVIN1, CAVIN2, CAVIN3 and CAVIN4. Interacts with CAVIN1. Interacts with CAVIN2; this augments the transactivation of NPPA. Interacts with CAV3, ADRA1A, ADRA1B, MAPK1 and MAPK3. In terms of tissue distribution, abundantly expressed in cardiac and skeletal muscle (at protein level). Weaker expression in aorta and lung. In heart, expressed in cardiomyocytes and vascular smooth muscle cells but not in other surrounding cells including vascular endothelial cells.

The protein localises to the cytoplasm. It localises to the myofibril. It is found in the sarcomere. The protein resides in the cytosol. Its subcellular location is the membrane. The protein localises to the caveola. It localises to the cell membrane. It is found in the sarcolemma. Its function is as follows. Modulates the morphology of formed caveolae in cardiomyocytes, but is not required for caveolar formation. Facilitates the recruitment of MAPK1/3 to caveolae within cardiomyocytes and regulates alpha-1 adrenergic receptor-induced hypertrophic responses in cardiomyocytes through MAPK1/3 activation. Contributes to proper membrane localization and stabilization of caveolin-3 (CAV3) in cardiomyocytes. Induces RHOA activation and activates NPPA transcription and myofibrillar organization through the Rho/ROCK signaling pathway. In Mus musculus (Mouse), this protein is Caveolae-associated protein 4 (Cavin4).